The following is a 548-amino-acid chain: Chaperonin GroEL (548 aa).

ATP is bound by residues 30-33, lysine 51, 87-91, glycine 415, 479-481, and aspartate 495; these read TLGP, DGTTT, and NAA. The interval 525–548 is disordered; sequence PKEDKTSDASSSPAGGMGGMGGMM. Residues 539–548 are compositionally biased toward gly residues; the sequence is GGMGGMGGMM.

Belongs to the chaperonin (HSP60) family. As to quaternary structure, forms a cylinder of 14 subunits composed of two heptameric rings stacked back-to-back. Interacts with the co-chaperonin GroES.

The protein localises to the cytoplasm. The catalysed reaction is ATP + H2O + a folded polypeptide = ADP + phosphate + an unfolded polypeptide.. Its function is as follows. Together with its co-chaperonin GroES, plays an essential role in assisting protein folding. The GroEL-GroES system forms a nano-cage that allows encapsulation of the non-native substrate proteins and provides a physical environment optimized to promote and accelerate protein folding. In Buchnera aphidicola subsp. Rhopalosiphum padi, this protein is Chaperonin GroEL.